Reading from the N-terminus, the 1035-residue chain is Valine--tRNA ligase (1035 aa).

The 'HIGH' region motif lies at 45 to 55 (PNVTGALHLGH). A coiled-coil region spans residues 253-281 (EKLSDANEKEAVDLNKQIEALQKRREERL). Lys-619 contacts ATP. Residues 967-1035 (DVEAELARLE…QDILKLQSKK (69 aa)) are a coiled coil.

It belongs to the class-I aminoacyl-tRNA synthetase family. ValS type 1 subfamily. In terms of assembly, monomer.

It is found in the cytoplasm. The enzyme catalyses tRNA(Val) + L-valine + ATP = L-valyl-tRNA(Val) + AMP + diphosphate. Its function is as follows. Catalyzes the attachment of valine to tRNA(Val). As ValRS can inadvertently accommodate and process structurally similar amino acids such as threonine, to avoid such errors, it has a 'posttransfer' editing activity that hydrolyzes mischarged Thr-tRNA(Val) in a tRNA-dependent manner. This is Valine--tRNA ligase from Rhodopirellula baltica (strain DSM 10527 / NCIMB 13988 / SH1).